A 1296-amino-acid chain; its full sequence is Phosphoribosylformylglycinamidine synthase (1296 aa).

The tract at residues 304–323 is disordered; sequence WPGAATGSGGEIRDEGATGR. ATP is bound by residues 306–317 and Ala677; that span reads GAATGSGGEIRD. Mg(2+) contacts are provided by Asp678, Glu717, Asn721, and Asp885. Ser887 serves as a coordination point for ATP. The span at 1000 to 1013 shows a compositional bias: basic and acidic residues; that stretch reads PDCADQEHQAKQDE. The interval 1000–1019 is disordered; that stretch reads PDCADQEHQAKQDESDPGLN. One can recognise a Glutamine amidotransferase type-1 domain in the interval 1043–1296; sequence VAVLREQGVN…MFRNARKQLG (254 aa). Catalysis depends on Cys1136, which acts as the Nucleophile. Catalysis depends on residues His1261 and Glu1263.

The protein in the N-terminal section; belongs to the FGAMS family. As to quaternary structure, monomer.

It is found in the cytoplasm. The enzyme catalyses N(2)-formyl-N(1)-(5-phospho-beta-D-ribosyl)glycinamide + L-glutamine + ATP + H2O = 2-formamido-N(1)-(5-O-phospho-beta-D-ribosyl)acetamidine + L-glutamate + ADP + phosphate + H(+). Its pathway is purine metabolism; IMP biosynthesis via de novo pathway; 5-amino-1-(5-phospho-D-ribosyl)imidazole from N(2)-formyl-N(1)-(5-phospho-D-ribosyl)glycinamide: step 1/2. Its function is as follows. Phosphoribosylformylglycinamidine synthase involved in the purines biosynthetic pathway. Catalyzes the ATP-dependent conversion of formylglycinamide ribonucleotide (FGAR) and glutamine to yield formylglycinamidine ribonucleotide (FGAM) and glutamate. The protein is Phosphoribosylformylglycinamidine synthase of Yersinia pseudotuberculosis serotype I (strain IP32953).